The chain runs to 471 residues: N-succinylglutamate 5-semialdehyde dehydrogenase (471 aa).

207 to 212 is an NAD(+) binding site; it reads GSAHAG. Active-site residues include Glu230 and Cys264.

The protein belongs to the aldehyde dehydrogenase family. AstD subfamily.

The enzyme catalyses N-succinyl-L-glutamate 5-semialdehyde + NAD(+) + H2O = N-succinyl-L-glutamate + NADH + 2 H(+). It participates in amino-acid degradation; L-arginine degradation via AST pathway; L-glutamate and succinate from L-arginine: step 4/5. Functionally, catalyzes the NAD-dependent reduction of succinylglutamate semialdehyde into succinylglutamate. This is N-succinylglutamate 5-semialdehyde dehydrogenase from Novosphingobium aromaticivorans (strain ATCC 700278 / DSM 12444 / CCUG 56034 / CIP 105152 / NBRC 16084 / F199).